A 107-amino-acid polypeptide reads, in one-letter code: Neuroparsin-A (107 aa).

The N-terminal stretch at methionine 1–alanine 22 is a signal peptide. A propeptide spanning residues glutamate 23–arginine 24 is cleaved from the precursor.

As to quaternary structure, homodimer; disulfide-linked.

In terms of biological role, neurosparins are multifunctional neurohormones: they inhibit the effects of juvenile hormone, stimulate fluid reabsorption of isolated recta and induces an increase in hemolymph lipid and trehalose levels. The polypeptide is Neuroparsin-A (Locusta migratoria (Migratory locust)).